Reading from the N-terminus, the 463-residue chain is A-type ATP synthase subunit B (463 aa).

It belongs to the ATPase alpha/beta chains family. Has multiple subunits with at least A(3), B(3), C, D, E, F, H, I and proteolipid K(x).

The protein localises to the cell membrane. Functionally, component of the A-type ATP synthase that produces ATP from ADP in the presence of a proton gradient across the membrane. The B chain is a regulatory subunit. This is A-type ATP synthase subunit B from Methanothrix thermoacetophila (strain DSM 6194 / JCM 14653 / NBRC 101360 / PT) (Methanosaeta thermophila).